Here is a 364-residue protein sequence, read N- to C-terminus: Doublecortin domain-containing protein 2C (364 aa).

Doublecortin domains lie at 16 to 98 and 136 to 217; these read KTIV…LDYI and RHIN…FPYW. Residues 233–255 are disordered; that stretch reads VEKNSQRKKKVDSKGKEPCKYDG.

As to expression, expressed in testis and spermatozoa (at protein level).

It localises to the cell projection. The protein localises to the cilium. It is found in the flagellum. The protein resides in the cytoplasm. The polypeptide is Doublecortin domain-containing protein 2C (Homo sapiens (Human)).